Reading from the N-terminus, the 92-residue chain is Large ribosomal subunit protein bL27 (92 aa).

The segment at 1–26 (MAHKKGASSSSNGRDSESKRLGVKRF) is disordered.

This sequence belongs to the bacterial ribosomal protein bL27 family.

The sequence is that of Large ribosomal subunit protein bL27 from Corynebacterium aurimucosum (strain ATCC 700975 / DSM 44827 / CIP 107346 / CN-1) (Corynebacterium nigricans).